The sequence spans 242 residues: Orotidine 5'-phosphate decarboxylase (242 aa).

Substrate is bound by residues aspartate 16, lysine 37, 64-73 (DLKFHDIPNT), threonine 128, arginine 190, glutamine 199, glycine 219, and arginine 220. The Proton donor role is filled by lysine 66.

The protein belongs to the OMP decarboxylase family. Type 1 subfamily. As to quaternary structure, homodimer.

The catalysed reaction is orotidine 5'-phosphate + H(+) = UMP + CO2. It functions in the pathway pyrimidine metabolism; UMP biosynthesis via de novo pathway; UMP from orotate: step 2/2. In terms of biological role, catalyzes the decarboxylation of orotidine 5'-monophosphate (OMP) to uridine 5'-monophosphate (UMP). This chain is Orotidine 5'-phosphate decarboxylase, found in Prochlorococcus marinus (strain MIT 9312).